Here is a 166-residue protein sequence, read N- to C-terminus: Transcriptional repressor NrdR (166 aa).

The segment at 3-34 (CIKCGNMEDKVIDSRPIKEGKSIRRRRECLRC) is a zinc-finger region. The ATP-cone domain occupies 49-139 (LFVKKRNGSI…VYCKFHDAKD (91 aa)).

This sequence belongs to the NrdR family. The cofactor is Zn(2+).

Functionally, negatively regulates transcription of bacterial ribonucleotide reductase nrd genes and operons by binding to NrdR-boxes. The chain is Transcriptional repressor NrdR from Methylacidiphilum infernorum (isolate V4) (Methylokorus infernorum (strain V4)).